We begin with the raw amino-acid sequence, 468 residues long: Cysteine--tRNA ligase (468 aa).

C29 provides a ligand contact to Zn(2+). A 'HIGH' region motif is present at residues 31-41; that stretch reads PTVYNYIHIGN. Positions 209, 234, and 238 each coordinate Zn(2+). Residues 266 to 270 carry the 'KMSKS' region motif; the sequence is KMSKS. K269 is a binding site for ATP. S270 is subject to Phosphoserine.

Belongs to the class-I aminoacyl-tRNA synthetase family. Monomer. The cofactor is Zn(2+).

It localises to the cytoplasm. The enzyme catalyses tRNA(Cys) + L-cysteine + ATP = L-cysteinyl-tRNA(Cys) + AMP + diphosphate. In Oceanobacillus iheyensis (strain DSM 14371 / CIP 107618 / JCM 11309 / KCTC 3954 / HTE831), this protein is Cysteine--tRNA ligase.